A 224-amino-acid polypeptide reads, in one-letter code: tRNA (guanine-N(7)-)-methyltransferase (224 aa).

The S-adenosyl-L-methionine site is built by E57, D82, and D109. D167 lines the substrate pocket.

The protein belongs to the class I-like SAM-binding methyltransferase superfamily. TrmB family.

It carries out the reaction guanosine(46) in tRNA + S-adenosyl-L-methionine = N(7)-methylguanosine(46) in tRNA + S-adenosyl-L-homocysteine. It functions in the pathway tRNA modification; N(7)-methylguanine-tRNA biosynthesis. Its function is as follows. Catalyzes the formation of N(7)-methylguanine at position 46 (m7G46) in tRNA. The chain is tRNA (guanine-N(7)-)-methyltransferase from Chloroflexus aurantiacus (strain ATCC 29366 / DSM 635 / J-10-fl).